The primary structure comprises 68 residues: Protein transport protein Sec61 gamma-2 subunit (68 aa).

The Cytoplasmic portion of the chain corresponds to Met-1–Glu-32. The helical transmembrane segment at Phe-33 to Ile-61 threads the bilayer. The Extracellular portion of the chain corresponds to Asn-62 to Ser-68.

It belongs to the SecE/SEC61-gamma family. As to quaternary structure, heterotrimeric complex composed of SEC61-alpha, SEC61-beta and SEC61-gamma.

It localises to the endoplasmic reticulum membrane. Its function is as follows. Necessary for protein translocation in the endoplasmic reticulum. This chain is Protein transport protein Sec61 gamma-2 subunit (Sec61gamma), found in Drosophila melanogaster (Fruit fly).